The primary structure comprises 149 residues: Large ribosomal subunit protein uL13 (149 aa).

Belongs to the universal ribosomal protein uL13 family. Part of the 50S ribosomal subunit.

This protein is one of the early assembly proteins of the 50S ribosomal subunit, although it is not seen to bind rRNA by itself. It is important during the early stages of 50S assembly. The chain is Large ribosomal subunit protein uL13 from Bifidobacterium adolescentis (strain ATCC 15703 / DSM 20083 / NCTC 11814 / E194a).